The following is a 306-amino-acid chain: Recombination-associated protein RdgC (306 aa).

Belongs to the RdgC family.

The protein resides in the cytoplasm. The protein localises to the nucleoid. Its function is as follows. May be involved in recombination. This Pseudomonas fluorescens (strain Pf0-1) protein is Recombination-associated protein RdgC.